The chain runs to 145 residues: Sperm mitochondrial-associated cysteine-rich protein (145 aa).

Phosphoserine occurs at positions 38, 45, 113, and 131. The disordered stretch occupies residues 105–145; it reads CSSENKTESDSDGSGQTQDRGAQTQQSPQGGQGNWNQKKTK. Polar residues predominate over residues 116–145; that stretch reads DGSGQTQDRGAQTQQSPQGGQGNWNQKKTK.

Testis. Selectively expressed in the spermatids of seminiferous tubules and in flagella of epididymal sperm.

It is found in the cytoplasm. The protein localises to the mitochondrion membrane. Involved in sperm motility. Its absence is associated with genetic background dependent male infertility. Infertility may be due to reduced sperm motility in the female reproductive tract and inability to penetrate the oocyte zona pellucida. In Rattus norvegicus (Rat), this protein is Sperm mitochondrial-associated cysteine-rich protein (Smcp).